The following is a 206-amino-acid chain: Fibroblast growth factor 4 (206 aa).

An N-terminal signal peptide occupies residues 1–30; it reads MSGPGTAAVALLPAVLLALLAPWAGRGGAA.

Belongs to the heparin-binding growth factors family. As to quaternary structure, interacts with FGFR1, FGFR2, FGFR3 and FGFR4. Affinity between fibroblast growth factors (FGFs) and their receptors is increased by heparan sulfate glycosaminoglycans that function as coreceptors.

The protein localises to the secreted. Functionally, plays an important role in the regulation of embryonic development, cell proliferation, and cell differentiation. Required for normal limb and cardiac valve development during embryogenesis. May play a role in embryonic molar tooth bud development via inducing the expression of MSX1, MSX2 and MSX1-mediated expression of SDC1 in dental mesenchyme cells. This chain is Fibroblast growth factor 4, found in Homo sapiens (Human).